We begin with the raw amino-acid sequence, 371 residues long: Histidinol-phosphate aminotransferase (371 aa).

An N6-(pyridoxal phosphate)lysine modification is found at Lys228.

Belongs to the class-II pyridoxal-phosphate-dependent aminotransferase family. Histidinol-phosphate aminotransferase subfamily. Requires pyridoxal 5'-phosphate as cofactor.

It carries out the reaction L-histidinol phosphate + 2-oxoglutarate = 3-(imidazol-4-yl)-2-oxopropyl phosphate + L-glutamate. Its pathway is amino-acid biosynthesis; L-histidine biosynthesis; L-histidine from 5-phospho-alpha-D-ribose 1-diphosphate: step 7/9. The sequence is that of Histidinol-phosphate aminotransferase from Methanococcus maripaludis (strain C5 / ATCC BAA-1333).